The chain runs to 612 residues: MFRCGGLAGAFKQKLVPLVRSVCVQRPKQRNRLPGNLFQQWRVPLELQMARQMASSGPSGGKMDNSVLVLIVGLSTIGAGAYAYKTIKEDQKRYNERIMGLGLSPEEKQRRAIASAAEGGSVPPIRVPSHVPFLLIGGGTAAFAAARSIRARDPGARVLIVSEDPELPYMRPPLSKELWFSDDPNVTKTLQFRQWNGKERSIYFQPPSFYVSAQDLPHIENGGVAVLTGKKVVHLDVRGNMVKLNDGSQITFEKCLIATGGTPRSLSAIDRAGAEVKSRTTLFRKIGDFRALEKISREVKSITVIGGGFLGSELACALGRKSQASGIEVIQLFPEKGNMGKILPEYLSNWTMEKVKREGVKVMPNAIVQSVGVSGGKLLIKLKDGRKVETDHIVTAVGLEPNVELAKTGGLEIDSDFGGFRVNAELQARSNIWVAGDAACFYDIKLGRRRVEHHDHAVVSGRLAGENMTGAAKPYWHQSMFWSDLGPDVGYEAIGLVDSSLPTVGVFAKATAQDNPKSATEQSGTGIRSESETESEASEITIPPSDPAVPQVPVEGEDYGKGVIFYLRDKVVVGIVLWNVFNRMPIARKIIKDGEQHEDLNEVAKLFNIHED.

2 consecutive short sequence motifs (mitochondrial localization signal) follow at residues 1–30 (MFRCGGLAGAFKQKLVPLVRSVCVQRPKQR) and 62–88 (KMDNSVLVLIVGLSTIGAGAYAYKTIK). The N-terminal 53 residues, 1–53 (MFRCGGLAGAFKQKLVPLVRSVCVQRPKQRNRLPGNLFQQWRVPLELQMARQM), are a transit peptide targeting the mitochondrion. 2 propeptides (removed in mature form) span residues 54–100 (ASSG…RIMG) and 55–101 (SSGP…IMGL). Position 108 is an N6-succinyllysine (K108). The residue at position 115 (S115) is a Phosphoserine. The interval 133 to 482 (FLLIGGGTAA…KPYWHQSMFW (350 aa)) is FAD-dependent oxidoreductase. FAD contacts are provided by residues 137–141 (GGGTA), 163–164 (ED), R171, and K176. W195 is a binding site for NAD(+). V232 is a binding site for FAD. K254 participates in a covalent cross-link: Glycyl lysine isopeptide (Lys-Gly) (interchain with G-Cter in ubiquitin). Phosphoserine is present on S267. R284 contacts FAD. NAD(+)-binding positions include 307–310 (GGFL), E335, and K341. S370 carries the post-translational modification Phosphoserine. An N6-acetyllysine modification is found at K387. An NAD(+)-binding site is contributed by G398. D437 lines the FAD pocket. Residues 445 to 450 (KLGRRR) carry the Nuclear localization signal motif. Residues 452-453 (EH), W482, and E492 contribute to the NAD(+) site. Residues 453 to 454 (HH) and W482 contribute to the FAD site. The span at 512–528 (AQDNPKSATEQSGTGIR) shows a compositional bias: polar residues. Positions 512–551 (AQDNPKSATEQSGTGIRSESETESEASEITIPPSDPAVPQ) are disordered. T520 carries the post-translational modification Phosphothreonine. Phosphoserine occurs at positions 523 and 529. N582 serves as a coordination point for NAD(+). K592 is subject to N6-acetyllysine.

Belongs to the FAD-dependent oxidoreductase family. Monomer (oxidized form). Homodimer (reduced form). Upon reduction with NADH, undergoes dimerization and forms tight, long-lived FADH2-NAD charge transfer complexes (CTC) resistant to oxidation. Also dimerizes with isoform 3 preventing its release from mitochondria. Interacts with XIAP/BIRC4. Interacts (via N-terminus) with EIF3G (via C-terminus). Interacts with PRELID1. Interacts with CHCHD4; the interaction increases in presence of NADH. Interacts with processed form of PARP1 (Poly [ADP-ribose] polymerase 1, processed C-terminus); interaction is mediated with poly-ADP-ribose chains attached to PARP1, promoting translocation into the nucleus. FAD is required as a cofactor. Under normal conditions, a 54-residue N-terminal segment is first proteolytically removed during or just after translocation into the mitochondrial intermembrane space (IMS) by the mitochondrial processing peptidase (MPP) to form the inner-membrane-anchored mature form (AIFmit). During apoptosis, it is further proteolytically processed at amino-acid position 101 leading to the generation of the mature form, which is confined to the mitochondrial IMS in a soluble form (AIFsol). AIFsol is released to the cytoplasm in response to specific death signals, and translocated to the nucleus, where it induces nuclear apoptosis in a caspase-independent manner. In terms of processing, ubiquitination by XIAP/BIRC4 does not lead to proteasomal degradation. Ubiquitination at Lys-254 by XIAP/BIRC4 blocks its ability to bind DNA and induce chromatin degradation, thereby inhibiting its ability to induce cell death.

The protein resides in the mitochondrion intermembrane space. The protein localises to the mitochondrion inner membrane. It localises to the cytoplasm. Its subcellular location is the nucleus. It is found in the perinuclear region. The catalysed reaction is A + NADH + H(+) = AH2 + NAD(+). In terms of biological role, functions both as NADH oxidoreductase and as regulator of apoptosis. In response to apoptotic stimuli, it is released from the mitochondrion intermembrane space into the cytosol and to the nucleus, where it functions as a proapoptotic factor in a caspase-independent pathway. Release into the cytoplasm is mediated upon binding to poly-ADP-ribose chains. The soluble form (AIFsol) found in the nucleus induces 'parthanatos' i.e. caspase-independent fragmentation of chromosomal DNA. Binds to DNA in a sequence-independent manner. Interacts with EIF3G, and thereby inhibits the EIF3 machinery and protein synthesis, and activates caspase-7 to amplify apoptosis. Plays a critical role in caspase-independent, pyknotic cell death in hydrogen peroxide-exposed cells. In contrast, participates in normal mitochondrial metabolism. Plays an important role in the regulation of respiratory chain biogenesis by interacting with CHCHD4 and controlling CHCHD4 mitochondrial import. The protein is Apoptosis-inducing factor 1, mitochondrial (Aifm1) of Rattus norvegicus (Rat).